Consider the following 199-residue polypeptide: UPF0301 protein Rfer_1377 (199 aa).

The protein belongs to the UPF0301 (AlgH) family.

The protein is UPF0301 protein Rfer_1377 of Albidiferax ferrireducens (strain ATCC BAA-621 / DSM 15236 / T118) (Rhodoferax ferrireducens).